A 484-amino-acid chain; its full sequence is Ribosomal protein uS12 methylthiotransferase RimO (484 aa).

The region spanning arginine 8 to alanine 119 is the MTTase N-terminal domain. [4Fe-4S] cluster is bound by residues cysteine 17, cysteine 53, cysteine 82, cysteine 184, cysteine 188, and cysteine 191. The region spanning leucine 170–arginine 401 is the Radical SAM core domain. The region spanning glutamate 403–glycine 469 is the TRAM domain.

The protein belongs to the methylthiotransferase family. RimO subfamily. [4Fe-4S] cluster serves as cofactor.

Its subcellular location is the cytoplasm. The catalysed reaction is L-aspartate(89)-[ribosomal protein uS12]-hydrogen + (sulfur carrier)-SH + AH2 + 2 S-adenosyl-L-methionine = 3-methylsulfanyl-L-aspartate(89)-[ribosomal protein uS12]-hydrogen + (sulfur carrier)-H + 5'-deoxyadenosine + L-methionine + A + S-adenosyl-L-homocysteine + 2 H(+). Catalyzes the methylthiolation of an aspartic acid residue of ribosomal protein uS12. The polypeptide is Ribosomal protein uS12 methylthiotransferase RimO (Saccharopolyspora erythraea (strain ATCC 11635 / DSM 40517 / JCM 4748 / NBRC 13426 / NCIMB 8594 / NRRL 2338)).